The sequence spans 496 residues: Pseudooxynicotine dehydrogenase (496 aa).

The segment at residues Met-1–Ala-42 is a signal peptide (tat-type signal). FAD-binding residues include Ala-69, Glu-88, Arg-96, Trp-113, Val-285, Ser-461, and Ile-471.

The protein belongs to the flavin monoamine oxidase family. As to quaternary structure, homodimer. FAD serves as cofactor. Post-translationally, predicted to be exported by the Tat system. The position of the signal peptide cleavage has not been experimentally proven.

Its subcellular location is the periplasm. It carries out the reaction pseudooxynicotine + 2 Fe(III)-[cytochrome c] + H2O = 4-oxo-4-(pyridin-3-yl)butanal + methylamine + 2 Fe(II)-[cytochrome c] + 2 H(+). The protein operates within alkaloid degradation; nicotine degradation. With respect to regulation, strongly inhibited by Na(2)MoO(4) and FeCl(3). Activity is nearly twice as high in the presence of Na(2)WO(4). Its function is as follows. Involved in nicotine degradation. Catalyzes the deamination of pseudooxynicotine to 3-succinoylsemialdehyde-pyridine. Functions as a dehydrogenase that uses the c-type cytochrome protein CycN as the physiological electron acceptor. O(2) is a poor electron acceptor. Pnao is oxidized by CycN 230 times faster than O(2) at equivalent oxidant concentrations. The sequence is that of Pseudooxynicotine dehydrogenase from Pseudomonas putida (strain DSM 28022 / S16).